The primary structure comprises 814 residues: Tax1-binding protein 1 homolog (814 aa).

Phosphoserine is present on residues S124, S138, and S225. Positions T144–Q623 form a coiled coil. The oligomerization stretch occupies residues E320–D420. S619 is modified (phosphoserine; by IKKA). The residue at position 632 (S632) is a Phosphoserine. S693 is modified (phosphoserine; by IKKA). The disordered stretch occupies residues S701–N733. 2 consecutive UBZ1-type zinc fingers follow at residues H752–H778 and W779–H805. Zn(2+) contacts are provided by C755, C758, H774, H778, C782, C785, H801, and H805.

Homooligomer. Interacts with TNFAIP3. Interacts with STARD13. Interacts with MYO6. Interacts with TOM1; the interaction is indirect and is mediated by MYO6, which acts as a bridge between TOM1 and TAX1BP1. Interacts with MAVS; this interaction induces MAVS polyubiquitination. Interacts with TNIP1. Interacts with TRAF6; this interaction mediates deubiquitination of TRAF6 and inhibition of NF-kappa-B activation. Interacts with RIPK1; this interaction negatively regulates RIPK1 ubiquitination. Interacts with NBR1. Interacts with TBK1. Interacts with RB1CC1. Interacts with SQSTM1. Interacts with AZI2. Interacts with TICAM1 and TRIM32; these interactions target TICAM1 to TAX1BP1-mediated selective autophagic degradation. Post-translationally, phosphorylated in the C-terminal region by CHUK/IKKA leading to NF-kappa-B signaling down-regulation.

It is found in the cytoplasm. Its subcellular location is the mitochondrion. The protein resides in the preautophagosomal structure. The protein localises to the cytoplasmic vesicle. It localises to the autophagosome. Functionally, ubiquitin-binding adapter that participates in inflammatory, antiviral and innate immune processes as well as selective autophagy regulation. Plays a key role in the negative regulation of NF-kappa-B and IRF3 signalings by acting as an adapter for the ubiquitin-editing enzyme A20/TNFAIP3 to bind and inactivate its substrates. Disrupts the interactions between the E3 ubiquitin ligase TRAF3 and TBK1/IKBKE to attenuate 'Lys63'-linked polyubiquitination of TBK1 and thereby IFN-beta production. Also recruits A20/TNFAIP3 to ubiquitinated signaling proteins TRAF6 and RIPK1, leading to their deubiquitination and disruption of IL-1 and TNF-induced NF-kappa-B signaling pathways. Inhibits virus-induced apoptosis by inducing the 'Lys-48'-linked polyubiquitination and degradation of MAVS via recruitment of the E3 ligase ITCH, thereby attenuating MAVS-mediated apoptosis signaling. As a macroautophagy/autophagy receptor, facilitates the xenophagic clearance of pathogenic bacteria such as Salmonella typhimurium and Mycobacterium tuberculosis. Upon NBR1 recruitment to the SQSTM1-ubiquitin condensates, acts as the major recruiter of RB1CC1 to these ubiquitin condensates to promote their autophagic degradation. Mediates the autophagic degradation of other substrates including TICAM1. This chain is Tax1-binding protein 1 homolog (Tax1bp1), found in Mus musculus (Mouse).